We begin with the raw amino-acid sequence, 418 residues long: Serine hydroxymethyltransferase (418 aa).

(6S)-5,6,7,8-tetrahydrofolate is bound by residues leucine 121 and 125 to 127 (GHL). Lysine 230 carries the post-translational modification N6-(pyridoxal phosphate)lysine. (6S)-5,6,7,8-tetrahydrofolate is bound at residue 356-358 (SPF).

This sequence belongs to the SHMT family. As to quaternary structure, homodimer. Pyridoxal 5'-phosphate serves as cofactor.

The protein localises to the cytoplasm. It catalyses the reaction (6R)-5,10-methylene-5,6,7,8-tetrahydrofolate + glycine + H2O = (6S)-5,6,7,8-tetrahydrofolate + L-serine. Its pathway is one-carbon metabolism; tetrahydrofolate interconversion. The protein operates within amino-acid biosynthesis; glycine biosynthesis; glycine from L-serine: step 1/1. Catalyzes the reversible interconversion of serine and glycine with tetrahydrofolate (THF) serving as the one-carbon carrier. This reaction serves as the major source of one-carbon groups required for the biosynthesis of purines, thymidylate, methionine, and other important biomolecules. Also exhibits THF-independent aldolase activity toward beta-hydroxyamino acids, producing glycine and aldehydes, via a retro-aldol mechanism. This Shewanella woodyi (strain ATCC 51908 / MS32) protein is Serine hydroxymethyltransferase.